We begin with the raw amino-acid sequence, 316 residues long: Iron-sulfur cluster assembly SufBD family protein MJ0034 (316 aa).

It belongs to the iron-sulfur cluster assembly SufBD family.

The polypeptide is Iron-sulfur cluster assembly SufBD family protein MJ0034 (Methanocaldococcus jannaschii (strain ATCC 43067 / DSM 2661 / JAL-1 / JCM 10045 / NBRC 100440) (Methanococcus jannaschii)).